A 418-amino-acid chain; its full sequence is Alpha-(1-&gt;3)-arabinofuranosyltransferase (418 aa).

The next 11 helical transmembrane spans lie at 25 to 45 (NAVA…VLAI), 81 to 101 (YLYN…THFT), 102 to 122 (LARW…FGLL), 125 to 145 (LSGW…AMLT), 153 to 173 (IFSN…WCVV), 183 to 203 (VIGL…LPLV), 210 to 230 (LILG…LVPG), 266 to 286 (MEIT…LALL), 293 to 312 (PYFW…FFLS), 327 to 349 (IFTL…AYFF), and 372 to 392 (ATVG…IWFI).

It belongs to the glycosyltransferase 87 family.

It is found in the cell membrane. The catalysed reaction is Adds an alpha-D-arabinofuranosyl group from trans,octacis-decaprenylphospho-beta-D-arabinofuranose at the 3-O-position of an alpha-(1-&gt;5)-arabinofuranan chain attached to a beta-(1-&gt;5)-galactofuranan chain.. The protein operates within cell wall biogenesis; cell wall polysaccharide biosynthesis. In terms of biological role, involved in the biosynthesis of the arabinogalactan (AG) region of the mycolylarabinogalactan-peptidoglycan (mAGP) complex, an essential component of the corynebacterial cell wall. Catalyzes the addition of an arabinofuranosyl (Araf) residue from the sugar donor beta-D-arabinofuranosyl-1-monophosphoryldecaprenol (DPA) on the C-3 of an alpha-(1-&gt;5)-linked Araf from the arabinan backbone of AG. This chain is Alpha-(1-&gt;3)-arabinofuranosyltransferase, found in Corynebacterium glutamicum (strain ATCC 13032 / DSM 20300 / JCM 1318 / BCRC 11384 / CCUG 27702 / LMG 3730 / NBRC 12168 / NCIMB 10025 / NRRL B-2784 / 534).